The primary structure comprises 391 residues: Adaptive-response sensory kinase SasA (391 aa).

A Histidine kinase domain is found at 169-391 (MLAHDLRSPL…CFHFTLPVCR (223 aa)). At histidine 172 the chain carries Phosphohistidine; by autocatalysis.

Homooligomerizes. Interacts with KaiC. Participates in the KaiABC clock complex, whose core is composed of a KaiC homohexamer, 6 KaiB and up to 6 KaiA dimers. SasA and KaiB(fs) compete to bind to KaiC.

The enzyme catalyses ATP + protein L-histidine = ADP + protein N-phospho-L-histidine.. Functionally, member of the two-component regulatory system SasA/RpaA involved in genome-wide circadian gene expression. One of several clock output pathways. Participates in the Kai clock protein complex, the main circadian regulator in cyanobacteria, via its interaction with KaiC. KaiC enhances the autophosphorylation activity of SasA, which then transfers its phosphate group to RpaA to activate it. In addition to its output function, recruits fold-shifted KaiB (KaiB(fs)) to KaiC to cooperatively form the KaiB(6):KaiC(6) complex (independent of SasA kinase activity). Required for robustness of the circadian rhythm of gene expression and is involved in clock output, also required for adaptation to light/dark cycles. This chain is Adaptive-response sensory kinase SasA, found in Rippkaea orientalis (strain PCC 8801 / RF-1) (Cyanothece sp. (strain PCC 8801)).